A 159-amino-acid polypeptide reads, in one-letter code: 2-C-methyl-D-erythritol 2,4-cyclodiphosphate synthase (159 aa).

A divalent metal cation contacts are provided by Asp8 and His10. Residues 8-10 and 34-35 each bind 4-CDP-2-C-methyl-D-erythritol 2-phosphate; these read DVH and HS. Residue His42 coordinates a divalent metal cation. 4-CDP-2-C-methyl-D-erythritol 2-phosphate contacts are provided by residues 56 to 58, 61 to 65, 100 to 106, 132 to 135, Phe139, and Arg142; these read DIG, FPDTD, AQAPKML, and TTTE.

Belongs to the IspF family. Homotrimer. Requires a divalent metal cation as cofactor.

The enzyme catalyses 4-CDP-2-C-methyl-D-erythritol 2-phosphate = 2-C-methyl-D-erythritol 2,4-cyclic diphosphate + CMP. Its pathway is isoprenoid biosynthesis; isopentenyl diphosphate biosynthesis via DXP pathway; isopentenyl diphosphate from 1-deoxy-D-xylulose 5-phosphate: step 4/6. Its function is as follows. Involved in the biosynthesis of isopentenyl diphosphate (IPP) and dimethylallyl diphosphate (DMAPP), two major building blocks of isoprenoid compounds. Catalyzes the conversion of 4-diphosphocytidyl-2-C-methyl-D-erythritol 2-phosphate (CDP-ME2P) to 2-C-methyl-D-erythritol 2,4-cyclodiphosphate (ME-CPP) with a corresponding release of cytidine 5-monophosphate (CMP). The protein is 2-C-methyl-D-erythritol 2,4-cyclodiphosphate synthase of Salmonella typhi.